The primary structure comprises 156 residues: SsrA-binding protein (156 aa).

Residues 134 to 156 (YDKRETLKRKEQDREMARALRKR) form a disordered region.

Belongs to the SmpB family.

The protein resides in the cytoplasm. In terms of biological role, required for rescue of stalled ribosomes mediated by trans-translation. Binds to transfer-messenger RNA (tmRNA), required for stable association of tmRNA with ribosomes. tmRNA and SmpB together mimic tRNA shape, replacing the anticodon stem-loop with SmpB. tmRNA is encoded by the ssrA gene; the 2 termini fold to resemble tRNA(Ala) and it encodes a 'tag peptide', a short internal open reading frame. During trans-translation Ala-aminoacylated tmRNA acts like a tRNA, entering the A-site of stalled ribosomes, displacing the stalled mRNA. The ribosome then switches to translate the ORF on the tmRNA; the nascent peptide is terminated with the 'tag peptide' encoded by the tmRNA and targeted for degradation. The ribosome is freed to recommence translation, which seems to be the essential function of trans-translation. The polypeptide is SsrA-binding protein (Latilactobacillus sakei subsp. sakei (strain 23K) (Lactobacillus sakei subsp. sakei)).